Consider the following 943-residue polypeptide: AP-1 complex subunit beta-1 (943 aa).

Lys-318 bears the N6-acetyllysine mark. A 3'-nitrotyrosine modification is found at Tyr-574. Residues 584-621 (GGRGVVHKSLPPRTASSESTESPETAPAGAPAGDQPDV) form a disordered region. A compositionally biased stretch (low complexity) spans 594 to 616 (PPRTASSESTESPETAPAGAPAG).

Belongs to the adaptor complexes large subunit family. In terms of assembly, adaptor protein complex 1 (AP-1) is a heterotetramer composed of two large adaptins (gamma-type subunit AP1G1 and beta-type subunit AP1B1), a medium adaptin (mu-type subunit AP1M1 or AP1M2) and a small adaptin (sigma-type subunit AP1S1 or AP1S2 or AP1S3). In terms of tissue distribution, widely expressed.

Its subcellular location is the cytoplasmic vesicle. It localises to the clathrin-coated vesicle membrane. The protein localises to the golgi apparatus. Its function is as follows. Subunit of clathrin-associated adaptor protein complex 1 that plays a role in protein sorting in the late-Golgi/trans-Golgi network (TGN) and/or endosomes. The AP complexes mediate both the recruitment of clathrin to membranes and the recognition of sorting signals within the cytosolic tails of transmembrane cargo molecules. The chain is AP-1 complex subunit beta-1 (Ap1b1) from Mus musculus (Mouse).